The following is a 135-amino-acid chain: MSSTEAQASKPLYGERVIAEGELICFDNPRPERPYEISIELPEFTCQCPFSGYPDFAVLRLLYQPGPRVIELKAIKLYVNSYRNCSISHEEAANKILDDLVVACDPVWMQLEADFNPRGNVHTVVRVSHGSRQPC.

Cys-48 (thioimide intermediate) is an active-site residue. Asp-55 acts as the Proton donor in catalysis. Residues 70–72 (IEL) and 89–90 (HE) contribute to the substrate site.

The protein belongs to the GTP cyclohydrolase I family. QueF type 1 subfamily.

It localises to the cytoplasm. It catalyses the reaction 7-aminomethyl-7-carbaguanine + 2 NADP(+) = 7-cyano-7-deazaguanine + 2 NADPH + 3 H(+). It functions in the pathway tRNA modification; tRNA-queuosine biosynthesis. Catalyzes the NADPH-dependent reduction of 7-cyano-7-deazaguanine (preQ0) to 7-aminomethyl-7-deazaguanine (preQ1). The protein is NADPH-dependent 7-cyano-7-deazaguanine reductase of Prochlorococcus marinus (strain MIT 9303).